The chain runs to 225 residues: Prepilin leader peptidase/N-methyltransferase (225 aa).

At methionine 1 to threonine 2 the chain is on the periplasmic side. The helical transmembrane segment at methionine 3 to alanine 23 threads the bilayer. Over tyrosine 24–cysteine 67 the chain is Cytoplasmic. The chain crosses the membrane as a helical span at residues alanine 68–leucine 88. At threonine 89–lysine 103 the chain is on the periplasmic side. A helical membrane pass occupies residues leucine 104–leucine 124. Residues histidine 125–alanine 127 lie on the Cytoplasmic side of the membrane. A helical transmembrane segment spans residues valine 128–valine 148. The Periplasmic portion of the chain corresponds to cysteine 149 to leucine 174. Residues proline 175 to leucine 195 traverse the membrane as a helical segment. At glutamine 196–threonine 202 the chain is on the cytoplasmic side. A helical membrane pass occupies residues isoleucine 203–isoleucine 223. Residues serine 224–tyrosine 225 lie on the Periplasmic side of the membrane.

The protein belongs to the peptidase A24 family.

The protein resides in the cell inner membrane. It catalyses the reaction Typically cleaves a -Gly-|-Phe- bond to release an N-terminal, basic peptide of 5-8 residues from type IV prepilin, and then N-methylates the new N-terminal amino group, the methyl donor being S-adenosyl-L-methionine.. Functionally, plays a role in type II pseudopili formation by proteolytically removing the leader sequence from substrate proteins and subsequently monomethylating the alpha-amino group of the newly exposed N-terminal phenylalanine. Substrates include proteins required for biogenesis of the type II general secretory apparatus. In Escherichia coli (strain K12), this protein is Prepilin leader peptidase/N-methyltransferase (gspO).